The following is a 253-amino-acid chain: Ubiquinone/menaquinone biosynthesis C-methyltransferase UbiE (253 aa).

Residues T76, D97, and 125 to 126 contribute to the S-adenosyl-L-methionine site; that span reads NA.

It belongs to the class I-like SAM-binding methyltransferase superfamily. MenG/UbiE family.

The catalysed reaction is a 2-demethylmenaquinol + S-adenosyl-L-methionine = a menaquinol + S-adenosyl-L-homocysteine + H(+). It catalyses the reaction a 2-methoxy-6-(all-trans-polyprenyl)benzene-1,4-diol + S-adenosyl-L-methionine = a 5-methoxy-2-methyl-3-(all-trans-polyprenyl)benzene-1,4-diol + S-adenosyl-L-homocysteine + H(+). It functions in the pathway quinol/quinone metabolism; menaquinone biosynthesis; menaquinol from 1,4-dihydroxy-2-naphthoate: step 2/2. The protein operates within cofactor biosynthesis; ubiquinone biosynthesis. Methyltransferase required for the conversion of demethylmenaquinol (DMKH2) to menaquinol (MKH2) and the conversion of 2-polyprenyl-6-methoxy-1,4-benzoquinol (DDMQH2) to 2-polyprenyl-3-methyl-6-methoxy-1,4-benzoquinol (DMQH2). The polypeptide is Ubiquinone/menaquinone biosynthesis C-methyltransferase UbiE (Nitrobacter hamburgensis (strain DSM 10229 / NCIMB 13809 / X14)).